The following is a 462-amino-acid chain: Exodeoxyribonuclease 7 large subunit (462 aa).

It belongs to the XseA family. Heterooligomer composed of large and small subunits.

Its subcellular location is the cytoplasm. It catalyses the reaction Exonucleolytic cleavage in either 5'- to 3'- or 3'- to 5'-direction to yield nucleoside 5'-phosphates.. In terms of biological role, bidirectionally degrades single-stranded DNA into large acid-insoluble oligonucleotides, which are then degraded further into small acid-soluble oligonucleotides. The sequence is that of Exodeoxyribonuclease 7 large subunit from Pectobacterium atrosepticum (strain SCRI 1043 / ATCC BAA-672) (Erwinia carotovora subsp. atroseptica).